A 493-amino-acid polypeptide reads, in one-letter code: Cysteine--tRNA ligase (493 aa).

Cysteine 29 contributes to the Zn(2+) binding site. A 'HIGH' region motif is present at residues 31-41; the sequence is VTVYDLCHLGH. Zn(2+) is bound by residues cysteine 213, histidine 238, and glutamate 242. Residues 270 to 274 carry the 'KMSKS' region motif; that stretch reads KMSKS. Position 273 (lysine 273) interacts with ATP.

It belongs to the class-I aminoacyl-tRNA synthetase family. As to quaternary structure, monomer. Zn(2+) is required as a cofactor.

The protein resides in the cytoplasm. It carries out the reaction tRNA(Cys) + L-cysteine + ATP = L-cysteinyl-tRNA(Cys) + AMP + diphosphate. In Parasynechococcus marenigrum (strain WH8102), this protein is Cysteine--tRNA ligase.